The chain runs to 359 residues: Nicotinate-nucleotide--dimethylbenzimidazole phosphoribosyltransferase (359 aa).

E318 serves as the catalytic Proton acceptor.

The protein belongs to the CobT family. As to quaternary structure, homodimer.

The catalysed reaction is 5,6-dimethylbenzimidazole + nicotinate beta-D-ribonucleotide = alpha-ribazole 5'-phosphate + nicotinate + H(+). Its pathway is nucleoside biosynthesis; alpha-ribazole biosynthesis; alpha-ribazole from 5,6-dimethylbenzimidazole: step 1/2. Its function is as follows. Catalyzes the synthesis of alpha-ribazole-5'-phosphate from nicotinate mononucleotide (NAMN) and 5,6-dimethylbenzimidazole (DMB). This Escherichia coli O9:H4 (strain HS) protein is Nicotinate-nucleotide--dimethylbenzimidazole phosphoribosyltransferase.